A 190-amino-acid polypeptide reads, in one-letter code: Transcription antitermination protein NusB (190 aa).

Positions 135–190 are disordered; the sequence is APAPESVAEEADEESSDSAAAASEPTDEGDVSDSPDSSGASDEPAAPSAEIQPTVD. Residues 141 to 150 are compositionally biased toward acidic residues; the sequence is VAEEADEESS.

Belongs to the NusB family.

Its function is as follows. Involved in transcription antitermination. Required for transcription of ribosomal RNA (rRNA) genes. Binds specifically to the boxA antiterminator sequence of the ribosomal RNA (rrn) operons. This Bifidobacterium longum (strain DJO10A) protein is Transcription antitermination protein NusB.